A 218-amino-acid chain; its full sequence is MGMWSIGAGAIGVAALALLLANTDMFLAKPEKAALEYLEDIDLKTLEKDAVTFKAKALWEKNGAVIMAVRRPGCFLCREEATDLSSLKPKLDELGVPLYAVVKEHIKNEVKDFQPYFKGEIFLDENKKFYGPQRRKMMFMGFVRLGVWQNFFRAWNGGFSGNLDGEGFILGGVFVMGPGKQGILLEHREKEFGDKVNLTSVLEAARKIRPQTSASEKQ.

Residues 3 to 101 form a thioredoxin fold region; sequence MWSIGAGAIG…DELGVPLYAV (99 aa). Catalysis depends on redox-active residues cysteine 74 and cysteine 77.

The protein belongs to the peroxiredoxin-like PRXL2 family. PRXL2A subfamily.

It localises to the cytoplasm. The protein resides in the secreted. Functionally, involved in redox regulation of the cell. Acts as an antioxidant. Inhibits TNFSF11-induced NFKB1 and JUN activation and osteoclast differentiation. May affect bone resorption and help to maintain bone mass. Acts as a negative regulator of macrophage-mediated inflammation by inhibiting macrophage production of inflammatory cytokines, probably through suppression of the MAPK signaling pathway. The polypeptide is Peroxiredoxin-like 2A (PRXL2A) (Bos taurus (Bovine)).